We begin with the raw amino-acid sequence, 163 residues long: Transcription antitermination protein NusB (163 aa).

A disordered region spans residues 1-21 (MTTFLSDSEHPQDVKAPPKSA).

Belongs to the NusB family.

Functionally, involved in transcription antitermination. Required for transcription of ribosomal RNA (rRNA) genes. Binds specifically to the boxA antiterminator sequence of the ribosomal RNA (rrn) operons. The sequence is that of Transcription antitermination protein NusB from Dechloromonas aromatica (strain RCB).